We begin with the raw amino-acid sequence, 243 residues long: Carboxy-S-adenosyl-L-methionine synthase (243 aa).

S-adenosyl-L-methionine contacts are provided by residues tyrosine 40, 65–67, 90–91, 118–119, asparagine 133, and arginine 200; these read GCS, DN, and DI.

Belongs to the class I-like SAM-binding methyltransferase superfamily. Cx-SAM synthase family. As to quaternary structure, homodimer.

It catalyses the reaction prephenate + S-adenosyl-L-methionine = carboxy-S-adenosyl-L-methionine + 3-phenylpyruvate + H2O. Functionally, catalyzes the conversion of S-adenosyl-L-methionine (SAM) to carboxy-S-adenosyl-L-methionine (Cx-SAM). This chain is Carboxy-S-adenosyl-L-methionine synthase, found in Shewanella piezotolerans (strain WP3 / JCM 13877).